The following is a 437-amino-acid chain: GTPase Der (437 aa).

EngA-type G domains follow at residues alanine 3–asparagine 167 and proline 177–serine 353. Residues glycine 9–serine 16, aspartate 56–tryptophan 60, asparagine 119–aspartate 122, glycine 183–serine 190, aspartate 230–isoleucine 234, and asparagine 295–aspartate 298 each bind GTP. A KH-like domain is found at threonine 354 to lysine 437.

This sequence belongs to the TRAFAC class TrmE-Era-EngA-EngB-Septin-like GTPase superfamily. EngA (Der) GTPase family. As to quaternary structure, associates with the 50S ribosomal subunit.

In terms of biological role, GTPase that plays an essential role in the late steps of ribosome biogenesis. This Porphyromonas gingivalis (strain ATCC BAA-308 / W83) protein is GTPase Der.